The following is a 489-amino-acid chain: MEARVISCTTFGDNKVVKIAVLNHQAITKYKAGENETTVVVSDDTCPEKDVKEIKKFCEKLGYVYEGRLSEEYTQTNTGPDDDWITNGFESDDDVDPSIKTIGFNYPHVNRRNKLPDPVEKEKSVSLWSMIKDNIGKDLTKVCLPVYFNEPLSSLQKCFEDLEYSYLLDQASEWGKRGNNLMRILNVAAFAVSGYASTKGRICKPFNPMLGETYEADYPDKGLRFFSEKVSHHPMIVACHCDGTGWKFWGDSNLKSKFWGRSIQLDPIGLLTLQFDDGEIVQWSKVTTSIYNLILGKLYCDHYGTMLIEGNGEYSCKLKFKKQSMMDRNPHQVQGIVEDKNGKTVAKLFGKWDESMYYVMVNQGKESESHLLWKRNKPLENPTKYNLTRFGITLNELTPDLKEMLPPTDSRLRPDQRYLEKGEFEMGNREKLRLEQRQRQAREKQERGWKPTWFSKEKGSETYRYIGGYWEARDSGRWDDCPDIFGQVH.

It belongs to the OSBP family. In terms of tissue distribution, expressed at low levels in flowers.

May be involved in the transport of sterols. The polypeptide is Oxysterol-binding protein-related protein 1B (ORP1B) (Arabidopsis thaliana (Mouse-ear cress)).